Here is a 105-residue protein sequence, read N- to C-terminus: uncharacterized protein (105 aa).

Disordered stretches follow at residues 29–55 (HTRVGVTDPDPRVPPLLPGPAGVTDES) and 72–105 (EQRGDRRAVRCEPAGEPPLDDVRTPAAPAVRSGR). Basic and acidic residues predominate over residues 72–81 (EQRGDRRAVR).

This is an uncharacterized protein from Streptomyces coelicolor (strain ATCC BAA-471 / A3(2) / M145).